A 349-amino-acid polypeptide reads, in one-letter code: NADH-ubiquinone oxidoreductase chain 2 (349 aa).

The next 9 helical transmembrane spans lie at 3–23 (PYVL…TFAS), 66–86 (AAAM…EWEI), 98–118 (VMLA…LPEV), 139–159 (FALM…TIGL), 178–198 (ILAY…QFAP), 199–219 (SLTL…FLTL), 240–260 (LAAL…LSGF), 274–294 (GLPL…YFYL), and 319–339 (FTMI…LLPL).

Belongs to the complex I subunit 2 family.

It localises to the mitochondrion inner membrane. It carries out the reaction a ubiquinone + NADH + 5 H(+)(in) = a ubiquinol + NAD(+) + 4 H(+)(out). Core subunit of the mitochondrial membrane respiratory chain NADH dehydrogenase (Complex I) that is believed to belong to the minimal assembly required for catalysis. Complex I functions in the transfer of electrons from NADH to the respiratory chain. The immediate electron acceptor for the enzyme is believed to be ubiquinone. This chain is NADH-ubiquinone oxidoreductase chain 2 (MT-ND2), found in Oncorhynchus mykiss (Rainbow trout).